A 92-amino-acid polypeptide reads, in one-letter code: Regakine-1 (92 aa).

An N-terminal signal peptide occupies residues M1–A21. Cystine bridges form between C32/C56 and C33/C72.

Belongs to the intercrine beta (chemokine CC) family. As to expression, plasma serum.

It localises to the secreted. In terms of biological role, chemotactic activity for neutrophils and lymphocytes. Binds to heparin. The protein is Regakine-1 of Bos taurus (Bovine).